The following is a 225-amino-acid chain: Cytidylate kinase (225 aa).

Residue G11–T19 coordinates ATP.

Belongs to the cytidylate kinase family. Type 1 subfamily.

Its subcellular location is the cytoplasm. It catalyses the reaction CMP + ATP = CDP + ADP. The catalysed reaction is dCMP + ATP = dCDP + ADP. This Bacillus cereus (strain G9842) protein is Cytidylate kinase.